We begin with the raw amino-acid sequence, 317 residues long: MAAPMELFCWSGGWGLPSVDLDSLAVLTYTRFTGAPLKIHKTSNPWQSPSGTLPALRTSDGKVITVPDKIITHLRKEKYNADYDLSARQGADTLAFMSLLEEKLLPVLIHTFWIDAKNYVEVTRKWYAEAMPFPLNFFLPGRMQRQYMERLQLLCGEHKSENEEELEKELYQEARECLTLLSQRLGSQKFFFGDAPASLDAFVFSHLALLLQAKLPSGKLQAHLRGLHNLCAYCTHILNLYFPRDGDEVPLPRQTPAAPETEEEPYRRRTQILSVLAGLAAMVGYALLSGIVSIQRTSPARAPGTRALGLAEEDEED.

Residues lysine 38, lysine 41, lysine 78, and lysine 168 each participate in a glycyl lysine isopeptide (Lys-Gly) (interchain with G-Cter in ubiquitin) cross-link. Residues 272–292 (ILSVLAGLAAMVGYALLSGIV) traverse the membrane as a helical segment.

It belongs to the metaxin family. In terms of assembly, interacts with MTX2/metaxin-2. Associates with the mitochondrial contact site and cristae organizing system (MICOS) complex, composed of at least MICOS10/MIC10, CHCHD3/MIC19, CHCHD6/MIC25, APOOL/MIC27, IMMT/MIC60, APOO/MIC23/MIC26 and QIL1/MIC13. This complex was also known under the names MINOS or MitOS complex. The MICOS complex associates with mitochondrial outer membrane proteins SAMM50, MTX1 and MTX2 (together described as components of the mitochondrial outer membrane sorting assembly machinery (SAM) complex) and DNAJC11, mitochondrial inner membrane protein TMEM11 and with HSPA9. The MICOS and SAM complexes together with DNAJC11 are part of a large protein complex spanning both membranes termed the mitochondrial intermembrane space bridging (MIB) complex. Interacts with ARMC1. In terms of processing, ubiquitinated by PRKN during mitophagy, leading to its degradation and enhancement of mitophagy. Deubiquitinated by USP30. As to expression, ubiquitous. Higher levels are seen in the kidney as compared to other tissues.

The protein localises to the mitochondrion outer membrane. Its function is as follows. Involved in transport of proteins into the mitochondrion. Essential for embryonic development. In Mus musculus (Mouse), this protein is Metaxin-1 (Mtx1).